The chain runs to 325 residues: Biotin synthase (325 aa).

Positions 49 to 267 (TQVQISTLLS…IAAARISMPR (219 aa)) constitute a Radical SAM core domain. Positions 64, 68, and 71 each coordinate [4Fe-4S] cluster. [2Fe-2S] cluster is bound by residues C108, C139, C199, and R271.

This sequence belongs to the radical SAM superfamily. Biotin synthase family. As to quaternary structure, homodimer. It depends on [4Fe-4S] cluster as a cofactor. [2Fe-2S] cluster is required as a cofactor.

It carries out the reaction (4R,5S)-dethiobiotin + (sulfur carrier)-SH + 2 reduced [2Fe-2S]-[ferredoxin] + 2 S-adenosyl-L-methionine = (sulfur carrier)-H + biotin + 2 5'-deoxyadenosine + 2 L-methionine + 2 oxidized [2Fe-2S]-[ferredoxin]. The protein operates within cofactor biosynthesis; biotin biosynthesis; biotin from 7,8-diaminononanoate: step 2/2. Its function is as follows. Catalyzes the conversion of dethiobiotin (DTB) to biotin by the insertion of a sulfur atom into dethiobiotin via a radical-based mechanism. This chain is Biotin synthase, found in Acidiphilium cryptum (strain JF-5).